The primary structure comprises 291 residues: MAGSLSEIKAKIISTEKTSKITSAMRMVSSAKLVKSEQAARDFQIYASKIRQITTDLLKSDLTTGSDNPMLVSRPVKKTGYIVITSDKGLVGGYNSKILKSIMDMIQEYHAAGDYEIISIGSIGSDFFKARGMNVAFELRGLADQPSFDQVGRIISQSVGMFVNEIFDELYVCYNHHVNSLTSQVRVQRMLPISDLVAEEAAEEGVTGFELEPNRHVILEQLLPQFTESLIYGAIIDAKTAEHAAGMTAMQTATDNAKHVINDLTIQYNRARQAAITQEITEIVAGANALE.

It belongs to the ATPase gamma chain family. As to quaternary structure, F-type ATPases have 2 components, CF(1) - the catalytic core - and CF(0) - the membrane proton channel. CF(1) has five subunits: alpha(3), beta(3), gamma(1), delta(1), epsilon(1). CF(0) has three main subunits: a, b and c.

It localises to the cell membrane. Produces ATP from ADP in the presence of a proton gradient across the membrane. The gamma chain is believed to be important in regulating ATPase activity and the flow of protons through the CF(0) complex. The polypeptide is ATP synthase gamma chain (Streptococcus equi subsp. equi (strain 4047)).